We begin with the raw amino-acid sequence, 617 residues long: Pyrophosphate--fructose 6-phosphate 1-phosphotransferase subunit alpha 2 (617 aa).

This sequence belongs to the phosphofructokinase type A (PFKA) family. PPi-dependent PFK group II subfamily. Clade 'Long' sub-subfamily. As to quaternary structure, tetramer of two alpha (regulatory) and two beta (catalytic) chains. In terms of tissue distribution, expressed in roots and specific parts such as the trichomes of leaves, cotyledon veins, as well as in stamen and gynoecium of flowers.

The protein resides in the cytoplasm. It functions in the pathway carbohydrate degradation; glycolysis; D-glyceraldehyde 3-phosphate and glycerone phosphate from D-glucose: step 3/4. Its activity is regulated as follows. Allosterically activated by fructose 2,6-bisphosphate. Regulatory subunit of pyrophosphate--fructose 6-phosphate 1-phosphotransferase. The protein is Pyrophosphate--fructose 6-phosphate 1-phosphotransferase subunit alpha 2 of Arabidopsis thaliana (Mouse-ear cress).